A 338-amino-acid polypeptide reads, in one-letter code: Ketol-acid reductoisomerase (NADP(+)) (338 aa).

A KARI N-terminal Rossmann domain is found at 1 to 181; that stretch reads MKVFYDKDCD…GGGRTGIIET (181 aa). Residues 24-27, Arg-47, Ser-50, Thr-52, and 82-85 each bind NADP(+); these read YGSQ and DEFQ. The active site involves His-107. Residue Gly-133 coordinates NADP(+). A KARI C-terminal knotted domain is found at 182–327; it reads TFKDETETDL…EQLRSMMPWI (146 aa). Residues Asp-190, Glu-194, Glu-226, and Glu-230 each coordinate Mg(2+). Ser-251 contacts substrate.

The protein belongs to the ketol-acid reductoisomerase family. The cofactor is Mg(2+).

It catalyses the reaction (2R)-2,3-dihydroxy-3-methylbutanoate + NADP(+) = (2S)-2-acetolactate + NADPH + H(+). The catalysed reaction is (2R,3R)-2,3-dihydroxy-3-methylpentanoate + NADP(+) = (S)-2-ethyl-2-hydroxy-3-oxobutanoate + NADPH + H(+). It functions in the pathway amino-acid biosynthesis; L-isoleucine biosynthesis; L-isoleucine from 2-oxobutanoate: step 2/4. The protein operates within amino-acid biosynthesis; L-valine biosynthesis; L-valine from pyruvate: step 2/4. In terms of biological role, involved in the biosynthesis of branched-chain amino acids (BCAA). Catalyzes an alkyl-migration followed by a ketol-acid reduction of (S)-2-acetolactate (S2AL) to yield (R)-2,3-dihydroxy-isovalerate. In the isomerase reaction, S2AL is rearranged via a Mg-dependent methyl migration to produce 3-hydroxy-3-methyl-2-ketobutyrate (HMKB). In the reductase reaction, this 2-ketoacid undergoes a metal-dependent reduction by NADPH to yield (R)-2,3-dihydroxy-isovalerate. This is Ketol-acid reductoisomerase (NADP(+)) from Pseudomonas entomophila (strain L48).